The primary structure comprises 773 residues: uncharacterized protein (773 aa).

Residues 192–219 are disordered; that stretch reads EASGTNNNPKEIEMNSDTTSSVPKSGST.

It is found in the cytoplasm. This is an uncharacterized protein from Schizosaccharomyces pombe (strain 972 / ATCC 24843) (Fission yeast).